The chain runs to 350 residues: Biotin synthase (350 aa).

In terms of domain architecture, Radical SAM core spans 54–278 (REIQLSTLLS…TMPQSYVRLS (225 aa)). Residues cysteine 69, cysteine 73, and cysteine 76 each contribute to the [4Fe-4S] cluster site. [2Fe-2S] cluster-binding residues include cysteine 113, cysteine 144, cysteine 204, and arginine 276.

Belongs to the radical SAM superfamily. Biotin synthase family. As to quaternary structure, homodimer. [4Fe-4S] cluster serves as cofactor. It depends on [2Fe-2S] cluster as a cofactor.

The catalysed reaction is (4R,5S)-dethiobiotin + (sulfur carrier)-SH + 2 reduced [2Fe-2S]-[ferredoxin] + 2 S-adenosyl-L-methionine = (sulfur carrier)-H + biotin + 2 5'-deoxyadenosine + 2 L-methionine + 2 oxidized [2Fe-2S]-[ferredoxin]. It participates in cofactor biosynthesis; biotin biosynthesis; biotin from 7,8-diaminononanoate: step 2/2. Functionally, catalyzes the conversion of dethiobiotin (DTB) to biotin by the insertion of a sulfur atom into dethiobiotin via a radical-based mechanism. In Neisseria meningitidis serogroup C (strain 053442), this protein is Biotin synthase.